Here is a 491-residue protein sequence, read N- to C-terminus: Ketol-acid reductoisomerase (NADP(+)) (491 aa).

One can recognise a KARI N-terminal Rossmann domain in the interval 14–208; sequence LKHLGKCRFM…GSHRAGVLES (195 aa). NADP(+)-binding positions include 45-48, Arg-68, and Ser-78; that span reads CGSQ. His-132 is an active-site residue. Gly-158 provides a ligand contact to NADP(+). KARI C-terminal knotted domains are found at residues 209-344 and 345-485; these read SFVA…QAPN and YQQE…MQNM. 4 residues coordinate Mg(2+): Asp-217, Glu-221, Glu-389, and Glu-393. Ser-414 contacts substrate.

Belongs to the ketol-acid reductoisomerase family. Mg(2+) is required as a cofactor.

The enzyme catalyses (2R)-2,3-dihydroxy-3-methylbutanoate + NADP(+) = (2S)-2-acetolactate + NADPH + H(+). It catalyses the reaction (2R,3R)-2,3-dihydroxy-3-methylpentanoate + NADP(+) = (S)-2-ethyl-2-hydroxy-3-oxobutanoate + NADPH + H(+). It participates in amino-acid biosynthesis; L-isoleucine biosynthesis; L-isoleucine from 2-oxobutanoate: step 2/4. Its pathway is amino-acid biosynthesis; L-valine biosynthesis; L-valine from pyruvate: step 2/4. In terms of biological role, involved in the biosynthesis of branched-chain amino acids (BCAA). Catalyzes an alkyl-migration followed by a ketol-acid reduction of (S)-2-acetolactate (S2AL) to yield (R)-2,3-dihydroxy-isovalerate. In the isomerase reaction, S2AL is rearranged via a Mg-dependent methyl migration to produce 3-hydroxy-3-methyl-2-ketobutyrate (HMKB). In the reductase reaction, this 2-ketoacid undergoes a metal-dependent reduction by NADPH to yield (R)-2,3-dihydroxy-isovalerate. In Blochmanniella pennsylvanica (strain BPEN), this protein is Ketol-acid reductoisomerase (NADP(+)).